Consider the following 305-residue polypeptide: Putative UDP-glucose 4-epimerase (305 aa).

NAD(+) is bound by residues 10-11 (FI), 30-35 (DNLTTG), 50-51 (DI), and 71-75 (QAAQI). 2 residues coordinate substrate: Ser-115 and Tyr-140. Residues Tyr-140 and Lys-144 each contribute to the NAD(+) site. The Proton acceptor role is filled by Tyr-140. Substrate is bound by residues Asn-169, 183–184 (VI), 198–200 (IIF), Arg-207, and 263–266 (REGE).

Belongs to the NAD(P)-dependent epimerase/dehydratase family. It depends on NAD(+) as a cofactor.

It catalyses the reaction UDP-alpha-D-glucose = UDP-alpha-D-galactose. The protein operates within carbohydrate metabolism; galactose metabolism. In terms of biological role, involved in the metabolism of galactose. Catalyzes the conversion of UDP-galactose (UDP-Gal) to UDP-glucose (UDP-Glc) through a mechanism involving the transient reduction of NAD. The polypeptide is Putative UDP-glucose 4-epimerase (Methanocaldococcus jannaschii (strain ATCC 43067 / DSM 2661 / JAL-1 / JCM 10045 / NBRC 100440) (Methanococcus jannaschii)).